The primary structure comprises 429 residues: Probable E3 ubiquitin-protein ligase makorin-1 (429 aa).

3 C3H1-type zinc fingers span residues Trp18–Thr45, Lys48–Pro75, and Glu153–Val180. Positions Cys181–His208 are makorin-type Cys-His. The segment at Cys226–Arg280 adopts an RING-type zinc-finger fold. A C3H1-type 4 zinc finger spans residues Gly309–Pro338. Positions Glu343–Arg362 are disordered. A compositionally biased stretch (low complexity) spans Gln348 to Asn358.

It catalyses the reaction S-ubiquitinyl-[E2 ubiquitin-conjugating enzyme]-L-cysteine + [acceptor protein]-L-lysine = [E2 ubiquitin-conjugating enzyme]-L-cysteine + N(6)-ubiquitinyl-[acceptor protein]-L-lysine.. It participates in protein modification; protein ubiquitination. In terms of biological role, E3 ubiquitin ligase catalyzing the covalent attachment of ubiquitin moieties onto substrate proteins. The protein is Probable E3 ubiquitin-protein ligase makorin-1 of Takifugu rubripes (Japanese pufferfish).